The following is a 144-amino-acid chain: Large ribosomal subunit protein uL15 (144 aa).

Residues 1 to 58 are disordered; the sequence is MQLNDLRSAPGARREKLRPGRGIGSGLGKTGGRGHKGQTSRSGGKIAPGFEGGQQPLH. Residues 21 to 31 show a composition bias toward gly residues; sequence RGIGSGLGKTG.

It belongs to the universal ribosomal protein uL15 family. As to quaternary structure, part of the 50S ribosomal subunit.

Functionally, binds to the 23S rRNA. This is Large ribosomal subunit protein uL15 from Azotobacter vinelandii (strain DJ / ATCC BAA-1303).